The chain runs to 413 residues: Multifunctional CCA protein (413 aa).

ATP-binding residues include Gly8 and Arg11. 2 residues coordinate CTP: Gly8 and Arg11. Residues Asp21 and Asp23 each coordinate Mg(2+). ATP contacts are provided by Arg91, Arg137, and Arg140. Residues Arg91, Arg137, and Arg140 each coordinate CTP. Positions Thr228 to Trp329 constitute an HD domain.

This sequence belongs to the tRNA nucleotidyltransferase/poly(A) polymerase family. Bacterial CCA-adding enzyme type 1 subfamily. In terms of assembly, monomer. Can also form homodimers and oligomers. Mg(2+) serves as cofactor. It depends on Ni(2+) as a cofactor.

The enzyme catalyses a tRNA precursor + 2 CTP + ATP = a tRNA with a 3' CCA end + 3 diphosphate. The catalysed reaction is a tRNA with a 3' CCA end + 2 CTP + ATP = a tRNA with a 3' CCACCA end + 3 diphosphate. In terms of biological role, catalyzes the addition and repair of the essential 3'-terminal CCA sequence in tRNAs without using a nucleic acid template. Adds these three nucleotides in the order of C, C, and A to the tRNA nucleotide-73, using CTP and ATP as substrates and producing inorganic pyrophosphate. tRNA 3'-terminal CCA addition is required both for tRNA processing and repair. Also involved in tRNA surveillance by mediating tandem CCA addition to generate a CCACCA at the 3' terminus of unstable tRNAs. While stable tRNAs receive only 3'-terminal CCA, unstable tRNAs are marked with CCACCA and rapidly degraded. In Salmonella typhimurium (strain LT2 / SGSC1412 / ATCC 700720), this protein is Multifunctional CCA protein.